Reading from the N-terminus, the 954-residue chain is Bifunctional glutamine synthetase adenylyltransferase/adenylyl-removing enzyme (954 aa).

Positions 1-452 are adenylyl removase; sequence MAVQKDSNKS…HFKATVGGEE (452 aa). Residues 458-954 form an adenylyl transferase region; that stretch reads EHWTAQLWNV…ILAIYQAILE (497 aa).

The protein belongs to the GlnE family. It depends on Mg(2+) as a cofactor.

The enzyme catalyses [glutamine synthetase]-O(4)-(5'-adenylyl)-L-tyrosine + phosphate = [glutamine synthetase]-L-tyrosine + ADP. The catalysed reaction is [glutamine synthetase]-L-tyrosine + ATP = [glutamine synthetase]-O(4)-(5'-adenylyl)-L-tyrosine + diphosphate. Functionally, involved in the regulation of glutamine synthetase GlnA, a key enzyme in the process to assimilate ammonia. When cellular nitrogen levels are high, the C-terminal adenylyl transferase (AT) inactivates GlnA by covalent transfer of an adenylyl group from ATP to specific tyrosine residue of GlnA, thus reducing its activity. Conversely, when nitrogen levels are low, the N-terminal adenylyl removase (AR) activates GlnA by removing the adenylyl group by phosphorolysis, increasing its activity. The regulatory region of GlnE binds the signal transduction protein PII (GlnB) which indicates the nitrogen status of the cell. This is Bifunctional glutamine synthetase adenylyltransferase/adenylyl-removing enzyme from Shewanella oneidensis (strain ATCC 700550 / JCM 31522 / CIP 106686 / LMG 19005 / NCIMB 14063 / MR-1).